The following is a 296-amino-acid chain: Bifunctional protein FolD (296 aa).

NADP(+) contacts are provided by residues 166–168 (GRS), Ser-191, and Ile-232.

The protein belongs to the tetrahydrofolate dehydrogenase/cyclohydrolase family. As to quaternary structure, homodimer.

The catalysed reaction is (6R)-5,10-methylene-5,6,7,8-tetrahydrofolate + NADP(+) = (6R)-5,10-methenyltetrahydrofolate + NADPH. The enzyme catalyses (6R)-5,10-methenyltetrahydrofolate + H2O = (6R)-10-formyltetrahydrofolate + H(+). The protein operates within one-carbon metabolism; tetrahydrofolate interconversion. Functionally, catalyzes the oxidation of 5,10-methylenetetrahydrofolate to 5,10-methenyltetrahydrofolate and then the hydrolysis of 5,10-methenyltetrahydrofolate to 10-formyltetrahydrofolate. This Cereibacter sphaeroides (strain ATCC 17029 / ATH 2.4.9) (Rhodobacter sphaeroides) protein is Bifunctional protein FolD.